The sequence spans 309 residues: MAPPLSSKVYVDGVYIPAALIVIGTAIVKRDWVVYSVALALALGTWKFFQLKPKKVLDPTKFQEFELKEKTIISHNVAIYRIQLPSPSSILGLPIGQHISIGADIPQPDGSSKEVVRSYTPISGDEQPGYVDLLIKSYPTGNISKYMAGLSVGQSIRVRGPKGAFVYQPNMVRHFGMIAGGTGITPMLQVVRAIVRGRAAGDTTQVDLIFANVTKEDILLKEDLDALAAEDKGFRVHYVLDRPPEGWTGGVGFVTQDMITKWLPKPADDVKILLCGPPPMVSGLKKATEALGFKKARPVSKLEDQVFAF.

The chain crosses the membrane as a helical span at residues 31 to 51; it reads DWVVYSVALALALGTWKFFQL. Residues 60–168 form the FAD-binding FR-type domain; sequence TKFQEFELKE…RGPKGAFVYQ (109 aa). FAD is bound by residues 148–163 and 174–208; these read AGLS…GPKG and HFGM…QVDL.

It belongs to the flavoprotein pyridine nucleotide cytochrome reductase family. As to quaternary structure, monomer. Component of the 2-(3-amino-3-carboxypropyl)histidine synthase complex composed of DPH1, DPH2, DPH3 and a NADH-dependent reductase, predominantly CBR1. FAD serves as cofactor.

The protein resides in the mitochondrion outer membrane. It carries out the reaction 2 Fe(III)-[cytochrome b5] + NADH = 2 Fe(II)-[cytochrome b5] + NAD(+) + H(+). The catalysed reaction is 2 Fe(3+)-[Dph3] + NADH = 2 Fe(2+)-[Dph3] + NAD(+) + H(+). It participates in protein modification; peptidyl-diphthamide biosynthesis. In terms of biological role, NADH-dependent reductase for DPH3 and cytochrome b5. Required for the first step of diphthamide biosynthesis, a post-translational modification of histidine which occurs in elongation factor 2. DPH1 and DPH2 transfer a 3-amino-3-carboxypropyl (ACP) group from S-adenosyl-L-methionine (SAM) to a histidine residue, the reaction is assisted by a reduction system comprising DPH3 and a NADH-dependent reductase, predominantly CBR1. By reducing DPH3, also involved in the formation of the tRNA wobble base modification mcm5s 2U (5-methoxycarbonylmethyl-2-thiouridine), mediated by the elongator complex. The cytochrome b5/NADH cytochrome b5 reductase electron transfer system supports the catalytic activity of several sterol biosynthetic enzymes. This chain is NADH-cytochrome b5 reductase 1 (CBR1), found in Pyricularia oryzae (strain 70-15 / ATCC MYA-4617 / FGSC 8958) (Rice blast fungus).